A 201-amino-acid polypeptide reads, in one-letter code: 3-isopropylmalate dehydratase small subunit (201 aa).

The protein belongs to the LeuD family. LeuD type 1 subfamily. Heterodimer of LeuC and LeuD.

It carries out the reaction (2R,3S)-3-isopropylmalate = (2S)-2-isopropylmalate. It participates in amino-acid biosynthesis; L-leucine biosynthesis; L-leucine from 3-methyl-2-oxobutanoate: step 2/4. Its function is as follows. Catalyzes the isomerization between 2-isopropylmalate and 3-isopropylmalate, via the formation of 2-isopropylmaleate. The chain is 3-isopropylmalate dehydratase small subunit from Shewanella putrefaciens (strain CN-32 / ATCC BAA-453).